We begin with the raw amino-acid sequence, 360 residues long: MTKAIDPGSQPLALQSLDMRSRDIFRRIVDSYLRDGEPVGSRSLSRILPSSLSPATIRNVMSDLEHLGLIYAPHISAGRLPTQAGLRFFVDAFMELGDLSDEERRTIEAQVRASGSGATLEHMLTEASQMLSGMSRGAGLVLAAKNEVALKHIEFIQLEPTKALAVLVSQNGDVENRVVELPAGITVSQLHEASNFLNAHIRGRTLAEARTEIARIKEETRAALDTLSQDLVEKGLAVWAGAESGLPARLIVRGRANLLENVTAQADIELLRHLFEDMETQDGLIQLLDLAEQGSGVRIFIGSENKLFSLSGSSLVVAPYRDKDARVVGALGVIGPTRLNYARIVPMVDYTAQLISRMLR.

It belongs to the HrcA family.

In terms of biological role, negative regulator of class I heat shock genes (grpE-dnaK-dnaJ and groELS operons). Prevents heat-shock induction of these operons. This is Heat-inducible transcription repressor HrcA from Mesorhizobium japonicum (strain LMG 29417 / CECT 9101 / MAFF 303099) (Mesorhizobium loti (strain MAFF 303099)).